A 207-amino-acid polypeptide reads, in one-letter code: ADP-ribosylation factor (207 aa).

A lipid anchor (N-myristoyl glycine) is attached at Gly2. GTP-binding positions include 32 to 39 (GLDGAGKT), 75 to 79 (DIGGQ), and 133 to 136 (NKID).

It belongs to the small GTPase superfamily. Arf family.

The protein localises to the golgi apparatus. GTP-binding protein involved in protein trafficking; may modulate vesicle budding and uncoating within the Golgi apparatus. The polypeptide is ADP-ribosylation factor (ARF-1) (Encephalitozoon cuniculi (strain GB-M1) (Microsporidian parasite)).